Consider the following 750-residue polypeptide: Photosystem I P700 chlorophyll a apoprotein A1 (750 aa).

Helical transmembrane passes span 70 to 93 (VFSA…FHGA), 156 to 179 (LYCT…FHYH), 195 to 219 (LNHH…HVSL), 291 to 309 (IAHH…GHMY), 346 to 369 (WHAQ…HHMY), 385 to 411 (LSLF…IFMV), 433 to 455 (AIIS…LYIH), and 531 to 549 (FLVH…LILL). Positions 573 and 582 each coordinate [4Fe-4S] cluster. The next 2 helical transmembrane spans lie at 589 to 610 (HVFL…HFSW) and 664 to 686 (LSAY…MFLF). A chlorophyll a'-binding site is contributed by His675. Chlorophyll a-binding residues include Met683 and Tyr691. Residue Trp692 coordinates phylloquinone. Residues 724–744 (AVGVTHYLLGGIATTWAFFLA) form a helical membrane-spanning segment.

This sequence belongs to the PsaA/PsaB family. The PsaA/B heterodimer binds the P700 chlorophyll special pair and subsequent electron acceptors. PSI consists of a core antenna complex that captures photons, and an electron transfer chain that converts photonic excitation into a charge separation. The eukaryotic PSI reaction center is composed of at least 11 subunits. P700 is a chlorophyll a/chlorophyll a' dimer, A0 is one or more chlorophyll a, A1 is one or both phylloquinones and FX is a shared 4Fe-4S iron-sulfur center. serves as cofactor.

It localises to the plastid. The protein resides in the chloroplast thylakoid membrane. The enzyme catalyses reduced [plastocyanin] + hnu + oxidized [2Fe-2S]-[ferredoxin] = oxidized [plastocyanin] + reduced [2Fe-2S]-[ferredoxin]. In terms of biological role, psaA and PsaB bind P700, the primary electron donor of photosystem I (PSI), as well as the electron acceptors A0, A1 and FX. PSI is a plastocyanin-ferredoxin oxidoreductase, converting photonic excitation into a charge separation, which transfers an electron from the donor P700 chlorophyll pair to the spectroscopically characterized acceptors A0, A1, FX, FA and FB in turn. Oxidized P700 is reduced on the lumenal side of the thylakoid membrane by plastocyanin. This is Photosystem I P700 chlorophyll a apoprotein A1 from Eucalyptus globulus subsp. globulus (Tasmanian blue gum).